The chain runs to 249 residues: Transmembrane protein 51 (249 aa).

2 helical membrane passes run 17-37 (IGLG…VPGF) and 64-84 (VAYV…CLSI). 3 disordered regions span residues 95–126 (ELAR…SRYY), 161–199 (TGLD…PLKV), and 213–249 (RITL…RPPD). A compositionally biased stretch (polar residues) spans 99–108 (IQQQAGTVPH). Phosphoserine is present on residues Ser109, Ser114, Ser178, and Ser188. Residues 167 to 178 (TPTSTRAETETS) are compositionally biased toward polar residues. A compositionally biased stretch (basic residues) spans 190-199 (LAKRLKPLKV). A compositionally biased stretch (pro residues) spans 220–234 (NVPPPSIEPLTPPPL).

It localises to the membrane. This Mus musculus (Mouse) protein is Transmembrane protein 51 (Tmem51).